A 190-amino-acid chain; its full sequence is Putative resolvase R771 (190 aa).

A DNA-binding region (H-T-H motif) is located at residues 11–30; sequence SSVLGVHQRTLYQWDKKGWI. The 130-residue stretch at 61-190 folds into the Resolvase/invertase-type recombinase catalytic domain; sequence LSICYVRVSS…RNGLKKYSNK (130 aa). Residues 66 to 92 are a coiled coil; the sequence is VRVSSNNQKDDLERQIKFMKKKYPNHT. Catalysis depends on S69, which acts as the O-(5'-phospho-DNA)-serine intermediate.

This sequence belongs to the site-specific recombinase resolvase family.

Resolvase catalyzes the resolution (a site-specific recombination) of the cointegrated replicon to yield the final transposition products. The chain is Putative resolvase R771 from Acanthamoeba polyphaga (Amoeba).